The sequence spans 217 residues: GTP cyclohydrolase 1 (217 aa).

The Zn(2+) site is built by cysteine 109, histidine 112, and cysteine 180.

It belongs to the GTP cyclohydrolase I family. As to quaternary structure, toroid-shaped homodecamer, composed of two pentamers of five dimers.

It catalyses the reaction GTP + H2O = 7,8-dihydroneopterin 3'-triphosphate + formate + H(+). The protein operates within cofactor biosynthesis; 7,8-dihydroneopterin triphosphate biosynthesis; 7,8-dihydroneopterin triphosphate from GTP: step 1/1. This Aliivibrio fischeri (strain ATCC 700601 / ES114) (Vibrio fischeri) protein is GTP cyclohydrolase 1.